The sequence spans 208 residues: Guanylate kinase (208 aa).

The Guanylate kinase-like domain occupies 5–184; it reads GLLIVFSGPS…AAERVKCVIE (180 aa). 12-19 contacts ATP; that stretch reads GPSGVGKG.

The protein belongs to the guanylate kinase family.

It localises to the cytoplasm. The enzyme catalyses GMP + ATP = GDP + ADP. Essential for recycling GMP and indirectly, cGMP. The protein is Guanylate kinase of Streptococcus pneumoniae serotype 4 (strain ATCC BAA-334 / TIGR4).